Consider the following 345-residue polypeptide: Gibberellin 2-beta-dioxygenase 2 (345 aa).

The Fe2OG dioxygenase domain maps to 170-285; it reads HSDSLLRINH…RMSMMYFAAP (116 aa). Fe cation is bound by residues H209, D211, and H266. The active site involves R276.

This sequence belongs to the iron/ascorbate-dependent oxidoreductase family. GA2OX subfamily. Fe cation serves as cofactor. In terms of tissue distribution, predominantly expressed in leaves.

It carries out the reaction gibberellin A1 + 2-oxoglutarate + O2 = gibberellin A8 + succinate + CO2. It functions in the pathway plant hormone biosynthesis; gibberellin biosynthesis. Functionally, catalyzes the 2-beta-hydroxylation of several biologically active gibberellins, leading to the homeostatic regulation of their endogenous level. Catabolism of gibberellins (GAs) plays a central role in plant development. Converts GA9/GA20 to GA51/GA29 and GA4/GA1 to GA34/GA8. In Pisum sativum (Garden pea), this protein is Gibberellin 2-beta-dioxygenase 2 (GA2OX2).